The chain runs to 233 residues: Putative N-acetylmuramoyl-L-alanine amidase (233 aa).

The MurNAc-LAA domain occupies 1 to 219; that stretch reads MIDPGHGGQD…IANAIYIALK (219 aa).

It belongs to the N-acetylmuramoyl-L-alanine amidase 3 family.

The protein resides in the secreted. The enzyme catalyses Hydrolyzes the link between N-acetylmuramoyl residues and L-amino acid residues in certain cell-wall glycopeptides.. In terms of biological role, cell-wall hydrolase involved in septum cleavage during cell division. This is Putative N-acetylmuramoyl-L-alanine amidase (amiB) from Buchnera aphidicola subsp. Schizaphis graminum (strain Sg).